The following is a 221-amino-acid chain: MVRRSLYFLAVMGVVRSSSGLYIPSVVLQELGIASSQGCLMIAETNNGNFGIVSSGLENPVYITESPQGHREVSWQPVRGEDRAVPIYAPSAEEVRESISSVRGSEPGQYIAPQPTGFVPASTPVFGTIESASTAGAAVPVEGVFVASTENPASTGSSSTSTCPPKGTAGTTDNKGKAGGAAADDKSKSSSSSSSKKKKKGAKSLVALGAVATTALFSIVM.

An N-terminal signal peptide occupies residues 1–20 (MVRRSLYFLAVMGVVRSSSG). A disordered region spans residues 150-203 (ENPASTGSSSTSTCPPKGTAGTTDNKGKAGGAAADDKSKSSSSSSSKKKKKGAK). The span at 154–173 (STGSSSTSTCPPKGTAGTTD) shows a compositional bias: low complexity. S192 is lipidated: GPI-anchor amidated serine. The propeptide at 193–221 (SSSKKKKKGAKSLVALGAVATTALFSIVM) is removed in mature form.

The protein resides in the spore wall. It localises to the membrane. Its subcellular location is the cytoplasm. In terms of biological role, spore wall component. The protein is Spore wall protein 3 (SWP3) of Encephalitozoon cuniculi (strain GB-M1) (Microsporidian parasite).